An 82-amino-acid chain; its full sequence is Protein Rv1078A (82 aa).

Basic residues predominate over residues 35–54; it reads GGPTRRLRRRPAVTRRRRPD. A disordered region spans residues 35-82; it reads GGPTRRLRRRPAVTRRRRPDRRFVRCRPSPTRRGLPGCWRHSSTGPHT.

It is found in the cytoplasm. In Mycobacterium tuberculosis (strain ATCC 25618 / H37Rv), this protein is Protein Rv1078A.